Here is a 250-residue protein sequence, read N- to C-terminus: Triosephosphate isomerase (250 aa).

A substrate-binding site is contributed by 9–11 (NWK). Catalysis depends on His94, which acts as the Electrophile. The Proton acceptor role is filled by Glu166. Substrate is bound by residues Gly172, Ser212, and 233–234 (GG).

It belongs to the triosephosphate isomerase family. In terms of assembly, homodimer.

It localises to the cytoplasm. The enzyme catalyses D-glyceraldehyde 3-phosphate = dihydroxyacetone phosphate. Its pathway is carbohydrate biosynthesis; gluconeogenesis. It participates in carbohydrate degradation; glycolysis; D-glyceraldehyde 3-phosphate from glycerone phosphate: step 1/1. Involved in the gluconeogenesis. Catalyzes stereospecifically the conversion of dihydroxyacetone phosphate (DHAP) to D-glyceraldehyde-3-phosphate (G3P). This Clostridium novyi (strain NT) protein is Triosephosphate isomerase.